The sequence spans 454 residues: uncharacterized protein (454 aa).

ATP is bound at residue 125–132 (GDVGCGKT).

It belongs to the AFG1 ATPase family.

This is an uncharacterized protein from Schizosaccharomyces pombe (strain 972 / ATCC 24843) (Fission yeast).